Reading from the N-terminus, the 192-residue chain is Probable GTP-binding protein EngB (192 aa).

The EngB-type G domain occupies 22 to 192; it reads GRPEIVFVGR…LLERLDLFSQ (171 aa). Residues 30–37, 57–61, 75–78, 142–145, and 172–174 each bind GTP; these read GRSNVGKS, GKTRL, DLPG, TKWD, and YSS. Positions 37 and 59 each coordinate Mg(2+).

It belongs to the TRAFAC class TrmE-Era-EngA-EngB-Septin-like GTPase superfamily. EngB GTPase family. It depends on Mg(2+) as a cofactor.

In terms of biological role, necessary for normal cell division and for the maintenance of normal septation. The chain is Probable GTP-binding protein EngB from Chlorobaculum parvum (strain DSM 263 / NCIMB 8327) (Chlorobium vibrioforme subsp. thiosulfatophilum).